A 103-amino-acid polypeptide reads, in one-letter code: Alpha-ketoglutarate dehydrogenase component 4 (103 aa).

The residue at position 1 (M1) is an N-acetylmethionine. K5 is modified (N6-succinyllysine). The disordered stretch occupies residues 23–70 (IRFPDRRDNPKPNVSEVLRSAGLPSHTSSISQHSKGSKSPDWLMHQGP). Residues 47-61 (SHTSSISQHSKGSKS) show a composition bias toward low complexity. 2 positions are modified to phosphoserine: S61 and S90.

It belongs to the alpha-ketoglutarate dehydrogenase component 4 family. As to quaternary structure, component of the 2-oxoglutarate dehydrogenase complex (OGDHC), composed of OGDH (2-oxoglutarate dehydrogenase; also called E1 subunit), DLST (dihydrolipoamide succinyltransferase; also called E2 subunit) and DLD (dihydrolipoamide dehydrogenase; also called E3 subunit), and the assembly factor KGD4. Within OGDHC complex, interacts (via N-terminus) with E3 subunit and (via C-terminus) with E2 subunit.

The protein resides in the mitochondrion. In terms of biological role, molecular adapter that is necessary to form a stable 2-oxoglutarate dehydrogenase enzyme complex (OGDHC). Enables the specific recruitment of E3 subunit to E2 subunit in the 2-oxoglutarate dehydrogenase complex (OGDHC). In Bos taurus (Bovine), this protein is Alpha-ketoglutarate dehydrogenase component 4 (KGD4).